A 296-amino-acid chain; its full sequence is Bifunctional protein FolD 1/3 (296 aa).

NADP(+) is bound by residues 166 to 168 (GRS), Ser-191, and Ile-232.

It belongs to the tetrahydrofolate dehydrogenase/cyclohydrolase family. Homodimer.

The enzyme catalyses (6R)-5,10-methylene-5,6,7,8-tetrahydrofolate + NADP(+) = (6R)-5,10-methenyltetrahydrofolate + NADPH. It carries out the reaction (6R)-5,10-methenyltetrahydrofolate + H2O = (6R)-10-formyltetrahydrofolate + H(+). Its pathway is one-carbon metabolism; tetrahydrofolate interconversion. Its function is as follows. Catalyzes the oxidation of 5,10-methylenetetrahydrofolate to 5,10-methenyltetrahydrofolate and then the hydrolysis of 5,10-methenyltetrahydrofolate to 10-formyltetrahydrofolate. This Ruegeria pomeroyi (strain ATCC 700808 / DSM 15171 / DSS-3) (Silicibacter pomeroyi) protein is Bifunctional protein FolD 1/3.